Reading from the N-terminus, the 167-residue chain is Protein-export protein SecB (167 aa).

It belongs to the SecB family. As to quaternary structure, homotetramer, a dimer of dimers. One homotetramer interacts with 1 SecA dimer.

It is found in the cytoplasm. Its function is as follows. One of the proteins required for the normal export of preproteins out of the cell cytoplasm. It is a molecular chaperone that binds to a subset of precursor proteins, maintaining them in a translocation-competent state. It also specifically binds to its receptor SecA. This is Protein-export protein SecB from Cellvibrio japonicus (strain Ueda107) (Pseudomonas fluorescens subsp. cellulosa).